The chain runs to 454 residues: Sensor histidine kinase YkoH (454 aa).

The Cytoplasmic portion of the chain corresponds to methionine 1–serine 12. A helical membrane pass occupies residues isoleucine 13–alanine 33. Residues leucine 34–lysine 153 are Extracellular-facing. The chain crosses the membrane as a helical span at residues isoleucine 154–leucine 174. At alanine 175–arginine 454 the chain is on the cytoplasmic side. The HAMP domain maps to arginine 176–aspartate 230. The 213-residue stretch at aspartate 238–asparagine 450 folds into the Histidine kinase domain. Position 241 is a phosphohistidine; by autocatalysis (histidine 241).

Its subcellular location is the cell membrane. It catalyses the reaction ATP + protein L-histidine = ADP + protein N-phospho-L-histidine.. In terms of biological role, probable member of the two-component regulatory system YkoH/YkoG. Potentially phosphorylates YkoG. This is Sensor histidine kinase YkoH (ykoH) from Bacillus subtilis (strain 168).